The sequence spans 544 residues: Membrane protein insertase YidC (544 aa).

A run of 5 helical transmembrane segments spans residues 13–33 (LSLF…SNIL), 343–363 (WGLS…PLTF), 409–429 (LGGC…YSLV), 461–481 (LYFV…FTQL), and 506–526 (MPIM…IYWI).

This sequence belongs to the OXA1/ALB3/YidC family. Type 1 subfamily. As to quaternary structure, interacts with the Sec translocase complex via SecD. Specifically interacts with transmembrane segments of nascent integral membrane proteins during membrane integration.

It localises to the cell inner membrane. Required for the insertion and/or proper folding and/or complex formation of integral membrane proteins into the membrane. Involved in integration of membrane proteins that insert both dependently and independently of the Sec translocase complex, as well as at least some lipoproteins. Aids folding of multispanning membrane proteins. This is Membrane protein insertase YidC from Borreliella burgdorferi (strain ATCC 35210 / DSM 4680 / CIP 102532 / B31) (Borrelia burgdorferi).